The following is a 1135-amino-acid chain: Retinoblastoma-like protein 2 (1135 aa).

The disordered stretch occupies residues 1–43; that stretch reads MASGGNQSSPPPPAAAASSEEEEEDGDTADRAQPAGSPSHQIQ. Ser410 is subject to Phosphoserine. Position 414 is a phosphothreonine (Thr414). The interval 414 to 613 is domain A; that stretch reads TPVSTATHSL…DRIRDNENRV (200 aa). Residues 414 to 1021 are pocket; binds E1A; it reads TPVSTATHSL…QTFAMKYSQA (608 aa). Ser417 is a glycosylation site (O-linked (GlcNAc) serine). Residues 614-824 form a spacer region; it reads PTCEEVTPPH…QGQPLTSSSI (211 aa). Ser636 is subject to Phosphoserine. Phosphothreonine is present on Thr639. Disordered stretches follow at residues 649–698, 806–825, and 932–995; these read DAGG…PPQP, ISPG…SSIR, and RRNS…EEEE. Residues 656-674 are compositionally biased toward polar residues; sequence SVTSPTTLYDRYSSPTVST. Ser659, Ser669, and Ser684 each carry phosphoserine. A compositionally biased stretch (low complexity) spans 806–818; the sequence is ISPGGQQQNQGQP. Positions 825–1021 are domain B; sequence RPRKTSSLSL…QTFAMKYSQA (197 aa). 2 stretches are compositionally biased toward polar residues: residues 935–950 and 958–969; these read SGSC…PTEL and DSSPVMRSNSTL. A phosphoserine mark is found at Ser942, Ser946, Ser960, Ser965, and Ser967. Thr968 is modified (phosphothreonine). Over residues 971 to 981 the composition is skewed to pro residues; that stretch reads VPQPSSAPPTP. Phosphoserine occurs at positions 975 and 976. At Thr980 the chain carries Phosphothreonine. A phosphoserine mark is found at Ser1031, Ser1064, Ser1076, and Ser1108.

It belongs to the retinoblastoma protein (RB) family. In terms of assembly, interacts with AATF, KMT5B and KMT5C. Component of the DREAM complex (also named LINC complex) at least composed of E2F4, E2F5, LIN9, LIN37, LIN52, LIN54, MYBL1, MYBL2, RBL1, RBL2, RBBP4, TFDP1 and TFDP2. The complex exists in quiescent cells where it represses cell cycle-dependent genes. It dissociates in S phase when LIN9, LIN37, LIN52 and LIN54 form a subcomplex that binds to MYBL2. Interacts with USP4. Part of the peroxisome proliferator activated receptor alpha (PPAR-alpha) interacting complex (PRIC). Interacts with RINT1. Interacts with PML. Interacts with RBBP9. Interacts with CD53. In terms of processing, during G0 and early G1 phase of the cell cycle, phosphorylated on Ser-636 and on 5 sites within the domain B. Phosphorylation on Ser-669 in G1 leads to its ubiquitin-dependent proteolysis.

Its subcellular location is the nucleus. Functionally, key regulator of entry into cell division. Directly involved in heterochromatin formation by maintaining overall chromatin structure and, in particular, that of constitutive heterochromatin by stabilizing histone methylation. Recruits and targets histone methyltransferases KMT5B and KMT5C, leading to epigenetic transcriptional repression. Controls histone H4 'Lys-20' trimethylation. Probably acts as a transcription repressor by recruiting chromatin-modifying enzymes to promoters. Potent inhibitor of E2F-mediated trans-activation, associates preferentially with E2F5. Binds to cyclins A and E. Binds to and may be involved in the transforming capacity of the adenovirus E1A protein. May act as a tumor suppressor. The chain is Retinoblastoma-like protein 2 (Rbl2) from Rattus norvegicus (Rat).